A 163-amino-acid polypeptide reads, in one-letter code: NADPH-dependent 7-cyano-7-deazaguanine reductase (163 aa).

Catalysis depends on Cys-54, which acts as the Thioimide intermediate. Asp-61 serves as the catalytic Proton donor. Residues 76-78 (VES) and 95-96 (HE) each bind substrate.

It belongs to the GTP cyclohydrolase I family. QueF type 1 subfamily.

The protein localises to the cytoplasm. The enzyme catalyses 7-aminomethyl-7-carbaguanine + 2 NADP(+) = 7-cyano-7-deazaguanine + 2 NADPH + 3 H(+). Its pathway is tRNA modification; tRNA-queuosine biosynthesis. Functionally, catalyzes the NADPH-dependent reduction of 7-cyano-7-deazaguanine (preQ0) to 7-aminomethyl-7-deazaguanine (preQ1). The sequence is that of NADPH-dependent 7-cyano-7-deazaguanine reductase from Streptococcus thermophilus (strain CNRZ 1066).